The sequence spans 21 residues: Snake venom serine protease jerdonase (21 aa).

The Peptidase S1 domain maps to 1-21 (IIGGDECNINEHPFLVALYDA).

It belongs to the peptidase S1 family. Snake venom subfamily. In terms of assembly, monomer. Glycosylated; contains 35.8% neutral carbohydrate. Expressed by the venom gland.

The protein resides in the secreted. With respect to regulation, inhibited by PMSF and soybean trypsin inhibitor. Partially inhibited by L-cysteine and DTT. Not affected by EDTA. Its function is as follows. Multifunctional venom serine protease that has fibrino(geno)lytic activity towards the A alpha-chain of human fibrinogen (FGA) and a slow activity towards the B beta-chain (FGB). Also hydrolyzes bovine low-molecular-mass kininogen and releases bradykinin. Catalyzes the hydrolysis of BAEE, S-2238 and S-2302. The chain is Snake venom serine protease jerdonase from Protobothrops jerdonii (Jerdon's pitviper).